We begin with the raw amino-acid sequence, 1427 residues long: DNA-directed RNA polymerase subunit beta' (1427 aa).

Cysteine 66, cysteine 68, cysteine 81, and cysteine 84 together coordinate Zn(2+). Positions 472, 474, and 476 each coordinate Mg(2+). Cysteine 815, cysteine 889, cysteine 896, and cysteine 899 together coordinate Zn(2+).

It belongs to the RNA polymerase beta' chain family. As to quaternary structure, the RNAP catalytic core consists of 2 alpha, 1 beta, 1 beta' and 1 omega subunit. When a sigma factor is associated with the core the holoenzyme is formed, which can initiate transcription. Mg(2+) is required as a cofactor. Requires Zn(2+) as cofactor.

It catalyses the reaction RNA(n) + a ribonucleoside 5'-triphosphate = RNA(n+1) + diphosphate. DNA-dependent RNA polymerase catalyzes the transcription of DNA into RNA using the four ribonucleoside triphosphates as substrates. In Bacteroides fragilis (strain YCH46), this protein is DNA-directed RNA polymerase subunit beta'.